The following is a 674-amino-acid chain: RNA polymerase sigma factor RpoD (674 aa).

Positions 214-252 (AEGAAPAARRPASDEPEYDADGNPISRIDEEEDDDDSSN) are disordered. Positions 440 to 510 (MVEANLRLVI…TRSIADQART (71 aa)) are sigma-70 factor domain-2. The short motif at 464–467 (DLIQ) is the Interaction with polymerase core subunit RpoC element. The tract at residues 519–595 (ETINKLVRTG…DKNAILPLDS (77 aa)) is sigma-70 factor domain-3. The sigma-70 factor domain-4 stretch occupies residues 608–661 (VLASLTPREERVLRMRFGIGMNTDHTLEEVGQQFSVTRERIRQIEAKALRKLKH). Positions 634 to 653 (LEEVGQQFSVTRERIRQIEA) form a DNA-binding region, H-T-H motif.

It belongs to the sigma-70 factor family. RpoD/SigA subfamily. In terms of assembly, interacts transiently with the RNA polymerase catalytic core.

It localises to the cytoplasm. Functionally, sigma factors are initiation factors that promote the attachment of RNA polymerase to specific initiation sites and are then released. This sigma factor is the primary sigma factor during exponential growth. This chain is RNA polymerase sigma factor RpoD, found in Rhodobacter capsulatus (strain ATCC BAA-309 / NBRC 16581 / SB1003).